A 166-amino-acid chain; its full sequence is Interferon gamma (166 aa).

A signal peptide spans 1 to 23; the sequence is MNYTSYILAFQLCVILGSSGCYC. Position 24 is a pyrrolidone carboxylic acid (Gln-24). N-linked (GlcNAc...) asparagine glycosylation is found at Asn-39 and Asn-106. The interval 147 to 166 is disordered; that stretch reads SNLRKRKRRQNQIQGRRASK.

The protein belongs to the type II (or gamma) interferon family. As to quaternary structure, homodimer. Interacts with IFNGR1 (via extracellular domain); this interaction promotes IFNGR1 dimerization. Released primarily from activated T lymphocytes.

It localises to the secreted. Type II interferon produced by immune cells such as T-cells and NK cells that plays crucial roles in antimicrobial, antiviral, and antitumor responses by activating effector immune cells and enhancing antigen presentation. Primarily signals through the JAK-STAT pathway after interaction with its receptor IFNGR1 to affect gene regulation. Upon IFNG binding, IFNGR1 intracellular domain opens out to allow association of downstream signaling components JAK2, JAK1 and STAT1, leading to STAT1 activation, nuclear translocation and transcription of IFNG-regulated genes. Many of the induced genes are transcription factors such as IRF1 that are able to further drive regulation of a next wave of transcription. Plays a role in class I antigen presentation pathway by inducing a replacement of catalytic proteasome subunits with immunoproteasome subunits. In turn, increases the quantity, quality, and repertoire of peptides for class I MHC loading. Increases the efficiency of peptide generation also by inducing the expression of activator PA28 that associates with the proteasome and alters its proteolytic cleavage preference. Up-regulates as well MHC II complexes on the cell surface by promoting expression of several key molecules such as cathepsins B/CTSB, H/CTSH, and L/CTSL. Participates in the regulation of hematopoietic stem cells during development and under homeostatic conditions by affecting their development, quiescence, and differentiation. The polypeptide is Interferon gamma (IFNG) (Lama glama (Llama)).